Consider the following 303-residue polypeptide: Probable 5-dehydro-4-deoxyglucarate dehydratase (303 aa).

Belongs to the DapA family.

It catalyses the reaction 5-dehydro-4-deoxy-D-glucarate + H(+) = 2,5-dioxopentanoate + CO2 + H2O. Its pathway is carbohydrate acid metabolism; D-glucarate degradation; 2,5-dioxopentanoate from D-glucarate: step 2/2. This Agrobacterium fabrum (strain C58 / ATCC 33970) (Agrobacterium tumefaciens (strain C58)) protein is Probable 5-dehydro-4-deoxyglucarate dehydratase.